The chain runs to 240 residues: MAQTSKYERVVLKLSGEALAGDDGFGINPIIIKSIAEQVAEVAKLDCEIAVIVGGGNIWRGKTGSDLGMDRGTADYMGMLATVMNALALQDSLEQLECDTRVLTSIEMKQVAEPYIRRRAIRHLEKNRVVIFAAGIGNPYFSTDTTAALRAAEVEADVILMGKNNVDGVYSADPKVDPNAIKYEHLTHIQMLQEGLQVMDSTASSFCMDNNIPLNVFSITEEGNIKRAVMGEKIGTLITK.

ATP is bound at residue 13 to 16 (KLSG). The interval 21–26 (GDDGFG) is involved in allosteric activation by GTP. Gly55 provides a ligand contact to UMP. 2 residues coordinate ATP: Gly56 and Arg60. Residues Asp75 and 136–143 (IGNPYFST) contribute to the UMP site. Asn164, Tyr170, and Asp173 together coordinate ATP.

It belongs to the UMP kinase family. As to quaternary structure, homohexamer.

It is found in the cytoplasm. It carries out the reaction UMP + ATP = UDP + ADP. The protein operates within pyrimidine metabolism; CTP biosynthesis via de novo pathway; UDP from UMP (UMPK route): step 1/1. With respect to regulation, allosterically activated by GTP. Inhibited by UTP. In terms of biological role, catalyzes the reversible phosphorylation of UMP to UDP. The sequence is that of Uridylate kinase from Staphylococcus saprophyticus subsp. saprophyticus (strain ATCC 15305 / DSM 20229 / NCIMB 8711 / NCTC 7292 / S-41).